The sequence spans 197 residues: Putative RNA polymerase II subunit B1 CTD phosphatase rtr1 (197 aa).

The RTR1-type zinc finger occupies 60–139; that stretch reads EARKYLRKSD…LSDEPLWIRE (80 aa). Residues Cys-83, Cys-88, Cys-115, and Cys-119 each coordinate Zn(2+).

This sequence belongs to the RPAP2 family.

The protein localises to the cytoplasm. The protein resides in the nucleus. It carries out the reaction O-phospho-L-seryl-[protein] + H2O = L-seryl-[protein] + phosphate. The enzyme catalyses O-phospho-L-threonyl-[protein] + H2O = L-threonyl-[protein] + phosphate. Functionally, putative RNA polymerase II subunit B1 C-terminal domain (CTD) phosphatase involved in RNA polymerase II transcription regulation. This chain is Putative RNA polymerase II subunit B1 CTD phosphatase rtr1, found in Schizosaccharomyces pombe (strain 972 / ATCC 24843) (Fission yeast).